A 500-amino-acid chain; its full sequence is Chromosomal replication initiator protein DnaA (500 aa).

Positions 1 to 81 (MVNASGDPVI…LQALRTVTGE (81 aa)) are domain I, interacts with DnaA modulators. The interval 81 to 155 (ENMFPAFKVV…QQKMNRDPET (75 aa)) is domain II. The segment at 156 to 377 (HLNKNFTFDS…GALTRVTAVA (222 aa)) is domain III, AAA+ region. ATP is bound by residues Gly200, Gly202, Lys203, and Thr204. The interval 378 to 500 (SLSNQPVTRA…TVRLKQSNTN (123 aa)) is domain IV, binds dsDNA.

This sequence belongs to the DnaA family. In terms of assembly, oligomerizes as a right-handed, spiral filament on DNA at oriC.

The protein localises to the cytoplasm. In terms of biological role, plays an essential role in the initiation and regulation of chromosomal replication. ATP-DnaA binds to the origin of replication (oriC) to initiate formation of the DNA replication initiation complex once per cell cycle. Binds the DnaA box (a 9 base pair repeat at the origin) and separates the double-stranded (ds)DNA. Forms a right-handed helical filament on oriC DNA; dsDNA binds to the exterior of the filament while single-stranded (ss)DNA is stabiized in the filament's interior. The ATP-DnaA-oriC complex binds and stabilizes one strand of the AT-rich DNA unwinding element (DUE), permitting loading of DNA polymerase. After initiation quickly degrades to an ADP-DnaA complex that is not apt for DNA replication. Binds acidic phospholipids. In Bifidobacterium longum subsp. infantis (strain ATCC 15697 / DSM 20088 / JCM 1222 / NCTC 11817 / S12), this protein is Chromosomal replication initiator protein DnaA.